A 486-amino-acid chain; its full sequence is ATP synthase subunit beta (486 aa).

170-177 (GGAGVGKT) serves as a coordination point for ATP.

This sequence belongs to the ATPase alpha/beta chains family. As to quaternary structure, F-type ATPases have 2 components, CF(1) - the catalytic core - and CF(0) - the membrane proton channel. CF(1) has five subunits: alpha(3), beta(3), gamma(1), delta(1), epsilon(1). CF(0) has three main subunits: a(1), b(2) and c(9-12). The alpha and beta chains form an alternating ring which encloses part of the gamma chain. CF(1) is attached to CF(0) by a central stalk formed by the gamma and epsilon chains, while a peripheral stalk is formed by the delta and b chains.

The protein localises to the cell membrane. It carries out the reaction ATP + H2O + 4 H(+)(in) = ADP + phosphate + 5 H(+)(out). Produces ATP from ADP in the presence of a proton gradient across the membrane. The catalytic sites are hosted primarily by the beta subunits. The chain is ATP synthase subunit beta from Kineococcus radiotolerans (strain ATCC BAA-149 / DSM 14245 / SRS30216).